A 206-amino-acid chain; its full sequence is High frequency lysogenization protein HflD homolog (206 aa).

Belongs to the HflD family.

The protein localises to the cytoplasm. It localises to the cell inner membrane. The protein is High frequency lysogenization protein HflD homolog of Pseudomonas syringae pv. tomato (strain ATCC BAA-871 / DC3000).